We begin with the raw amino-acid sequence, 310 residues long: N-acetyl-gamma-glutamyl-phosphate reductase (310 aa).

The active site involves Cys-117.

It belongs to the NAGSA dehydrogenase family. Type 2 subfamily.

It is found in the cytoplasm. It carries out the reaction N-acetyl-L-glutamate 5-semialdehyde + phosphate + NADP(+) = N-acetyl-L-glutamyl 5-phosphate + NADPH + H(+). Its pathway is amino-acid biosynthesis; L-arginine biosynthesis; N(2)-acetyl-L-ornithine from L-glutamate: step 3/4. In terms of biological role, catalyzes the NADPH-dependent reduction of N-acetyl-5-glutamyl phosphate to yield N-acetyl-L-glutamate 5-semialdehyde. The protein is N-acetyl-gamma-glutamyl-phosphate reductase of Allorhizobium ampelinum (strain ATCC BAA-846 / DSM 112012 / S4) (Agrobacterium vitis (strain S4)).